We begin with the raw amino-acid sequence, 113 residues long: UPF0122 protein MGAS10270_Spy1030 (113 aa).

This sequence belongs to the UPF0122 family.

Functionally, might take part in the signal recognition particle (SRP) pathway. This is inferred from the conservation of its genetic proximity to ftsY/ffh. May be a regulatory protein. This chain is UPF0122 protein MGAS10270_Spy1030, found in Streptococcus pyogenes serotype M2 (strain MGAS10270).